We begin with the raw amino-acid sequence, 548 residues long: Inosine-5'-monophosphate dehydrogenase (548 aa).

2 consecutive CBS domains span residues 121 to 201 and 205 to 261; these read FILD…EDPV and MSTE…PLAS. NAD(+) is bound by residues 298 to 300 and 348 to 350; these read DSS and GMG. Positions 350 and 352 each coordinate K(+). S353 serves as a coordination point for IMP. C355 provides a ligand contact to K(+). C355 acts as the Thioimidate intermediate in catalysis. IMP contacts are provided by residues 388-390 and 411-412; these read DGG and GS. The active-site Proton acceptor is R461. Residue Q473 coordinates IMP. The disordered stretch occupies residues 527 to 548; it reads ASAQTEGNVHGLHSHEKKLYSS. Position 528 (S528) interacts with K(+). A compositionally biased stretch (basic and acidic residues) spans 539 to 548; the sequence is HSHEKKLYSS.

Belongs to the IMPDH/GMPR family. Homotetramer. K(+) is required as a cofactor.

The protein localises to the cytoplasm. The enzyme catalyses IMP + NAD(+) + H2O = XMP + NADH + H(+). It functions in the pathway purine metabolism; XMP biosynthesis via de novo pathway; XMP from IMP: step 1/1. With respect to regulation, mycophenolic acid (MPA) is a non-competitive inhibitor that prevents formation of the closed enzyme conformation by binding to the same site as the amobile flap. In contrast, mizoribine monophosphate (MZP) is a competitive inhibitor that induces the closed conformation. MPA is a potent inhibitor of mammalian IMPDHs but a poor inhibitor of the bacterial enzymes. MZP is a more potent inhibitor of bacterial IMPDH. In terms of biological role, catalyzes the conversion of inosine 5'-phosphate (IMP) to xanthosine 5'-phosphate (XMP), the first committed and rate-limiting step in the de novo synthesis of guanine nucleotides, and therefore plays an important role in the regulation of cell growth. Part of the gene cluster that mediates the biosynthesis of mycophenolic acid (MPA), the first isolated antibiotic natural product in the world. Does not play a role in the biosynthesis of MPA, but is involved in self resistance to MPA, since MPA acts as an inhibitor of IMP dehydrogenases. This Penicillium brevicompactum protein is Inosine-5'-monophosphate dehydrogenase.